Here is a 1159-residue protein sequence, read N- to C-terminus: Ferroxidase HEPHL1 (1159 aa).

The N-terminal stretch at 1 to 24 is a signal peptide; the sequence is MPRKQPAGCIFLLTFLGLSGLVGT. Plastocyanin-like domains lie at 25–207, 218–366, 379–561, 571–719, 731–907, and 915–1092; these read VTRT…LLVC, TRND…VDNC, QRRY…LLVC, TQKG…VSSC, MIRT…LITC, and KGRR…VPSN. Over 25-1114 the chain is Extracellular; it reads VTRTYYIGIV…KNLGPTGAKA (1090 aa). Residues His127 and His129 each coordinate Cu cation. N-linked (GlcNAc...) asparagine glycosylation occurs at Asn161. Cys181 and Cys207 are joined by a disulfide. Positions 187 and 189 each coordinate Cu cation. Asn236 carries N-linked (GlcNAc...) asparagine glycosylation. An intrachain disulfide couples Cys285 to Cys366. His304, Cys347, and His352 together coordinate Cu cation. Asn407 is a glycosylation site (N-linked (GlcNAc...) asparagine). The cysteines at positions 535 and 561 are disulfide-linked. Asn589 carries an N-linked (GlcNAc...) asparagine glycan. Cys638 and Cys719 are oxidised to a cystine. His657, Cys700, His705, and Met710 together coordinate Cu cation. Residue Asn772 is glycosylated (N-linked (GlcNAc...) asparagine). The cysteines at positions 881 and 907 are disulfide-linked. N-linked (GlcNAc...) asparagine glycosylation is present at Asn935. Cu cation-binding residues include His1003, His1006, His1008, His1048, Cys1049, His1050, His1054, and Met1059. Residues 1115–1135 traverse the membrane as a helical segment; it reads ALVILFIIGLLLLITTVILSL. Topologically, residues 1136–1159 are cytoplasmic; sequence RLCSAMKQTDYQQVQSCALPTDAL.

The protein belongs to the multicopper oxidase family. Cu cation serves as cofactor.

Its subcellular location is the membrane. The catalysed reaction is 4 Fe(2+) + O2 + 4 H(+) = 4 Fe(3+) + 2 H2O. In terms of biological role, is a copper-binding glycoprotein with ferroxidase activity. It oxidizes Fe(2+) to Fe(3+) without releasing radical oxygen species. May be involved in the regulation of intracellular iron content. The protein is Ferroxidase HEPHL1 (HEPHL1) of Homo sapiens (Human).